The sequence spans 495 residues: tRNA(Ile)-lysidine synthase (495 aa).

26-31 (SGGSDS) provides a ligand contact to ATP.

The protein belongs to the tRNA(Ile)-lysidine synthase family.

The protein resides in the cytoplasm. It catalyses the reaction cytidine(34) in tRNA(Ile2) + L-lysine + ATP = lysidine(34) in tRNA(Ile2) + AMP + diphosphate + H(+). Ligates lysine onto the cytidine present at position 34 of the AUA codon-specific tRNA(Ile) that contains the anticodon CAU, in an ATP-dependent manner. Cytidine is converted to lysidine, thus changing the amino acid specificity of the tRNA from methionine to isoleucine. The chain is tRNA(Ile)-lysidine synthase from Bartonella tribocorum (strain CIP 105476 / IBS 506).